A 154-amino-acid polypeptide reads, in one-letter code: 6,7-dimethyl-8-ribityllumazine synthase (154 aa).

5-amino-6-(D-ribitylamino)uracil is bound by residues phenylalanine 21, 55–57 (AFE), and 79–81 (CVI). Residue 84-85 (AT) coordinates (2S)-2-hydroxy-3-oxobutyl phosphate. The active-site Proton donor is the histidine 87. Residue phenylalanine 112 coordinates 5-amino-6-(D-ribitylamino)uracil. Arginine 126 provides a ligand contact to (2S)-2-hydroxy-3-oxobutyl phosphate.

Belongs to the DMRL synthase family. In terms of assembly, forms an icosahedral capsid composed of 60 subunits, arranged as a dodecamer of pentamers.

It catalyses the reaction (2S)-2-hydroxy-3-oxobutyl phosphate + 5-amino-6-(D-ribitylamino)uracil = 6,7-dimethyl-8-(1-D-ribityl)lumazine + phosphate + 2 H2O + H(+). It functions in the pathway cofactor biosynthesis; riboflavin biosynthesis; riboflavin from 2-hydroxy-3-oxobutyl phosphate and 5-amino-6-(D-ribitylamino)uracil: step 1/2. In terms of biological role, catalyzes the formation of 6,7-dimethyl-8-ribityllumazine by condensation of 5-amino-6-(D-ribitylamino)uracil with 3,4-dihydroxy-2-butanone 4-phosphate. This is the penultimate step in the biosynthesis of riboflavin. The sequence is that of 6,7-dimethyl-8-ribityllumazine synthase from Staphylococcus aureus (strain MRSA252).